Here is a 353-residue protein sequence, read N- to C-terminus: Glutamine synthetase nodule isozyme (353 aa).

Positions 19 to 99 (IIAEYIWVGG…VMCDTYTPAG (81 aa)) constitute a GS beta-grasp domain. Residues 106 to 353 (KRHAAAKIFS…TSMIAETTLL (248 aa)) enclose the GS catalytic domain.

The protein belongs to the glutamine synthetase family. As to quaternary structure, homooctamer.

It is found in the cytoplasm. It carries out the reaction L-glutamate + NH4(+) + ATP = L-glutamine + ADP + phosphate + H(+). This is Glutamine synthetase nodule isozyme from Lupinus luteus (European yellow lupine).